The sequence spans 257 residues: Imidazole glycerol phosphate synthase subunit HisF (257 aa).

Residues Asp-11 and Asp-130 contribute to the active site.

The protein belongs to the HisA/HisF family. In terms of assembly, heterodimer of HisH and HisF.

Its subcellular location is the cytoplasm. The catalysed reaction is 5-[(5-phospho-1-deoxy-D-ribulos-1-ylimino)methylamino]-1-(5-phospho-beta-D-ribosyl)imidazole-4-carboxamide + L-glutamine = D-erythro-1-(imidazol-4-yl)glycerol 3-phosphate + 5-amino-1-(5-phospho-beta-D-ribosyl)imidazole-4-carboxamide + L-glutamate + H(+). Its pathway is amino-acid biosynthesis; L-histidine biosynthesis; L-histidine from 5-phospho-alpha-D-ribose 1-diphosphate: step 5/9. In terms of biological role, IGPS catalyzes the conversion of PRFAR and glutamine to IGP, AICAR and glutamate. The HisF subunit catalyzes the cyclization activity that produces IGP and AICAR from PRFAR using the ammonia provided by the HisH subunit. This Shewanella frigidimarina (strain NCIMB 400) protein is Imidazole glycerol phosphate synthase subunit HisF.